A 142-amino-acid polypeptide reads, in one-letter code: Dromaiocalcin-1 (142 aa).

Cystine bridges form between cysteine 13-cysteine 24, cysteine 41-cysteine 138, and cysteine 113-cysteine 130. Residues 20–139 enclose the C-type lectin domain; sequence FRGNCYGYFR…CGERNAFICK (120 aa).

It is found in the secreted. It localises to the extracellular space. Its subcellular location is the extracellular matrix. The protein is Dromaiocalcin-1 of Dromaius novaehollandiae (Emu).